The primary structure comprises 445 residues: Zinc finger protein SHOOT GRAVITROPISM 5 (445 aa).

Over residues 22–31 the composition is skewed to low complexity; sequence SSSDPFLSSS. The tract at residues 22–59 is disordered; sequence SSSDPFLSSSENGVTTTNTSTQKRKRRPAGTPDPDAEV. Over residues 32–42 the composition is skewed to polar residues; the sequence is ENGVTTTNTST. 3 consecutive C2H2-type zinc fingers follow at residues 73-95, 115-145, and 151-178; these read YICE…RRRH, YVCP…RRKH, and WVCE…TRGH. Positions 153, 156, 169, 173, 180, 182, 195, and 199 each coordinate Zn(2+). The segment at 178–201 adopts a CCHC-type 2; atypical zinc-finger fold; that stretch reads HSCDCGRVFSRVESFIEHQDNCSA. The interval 188-200 is SHR-binding; it reads RVESFIEHQDNCS. Disordered regions lie at residues 203 to 253 and 281 to 314; these read RVHR…LEGR and SSNQ…LNLS. The segment covering 214 to 248 has biased composition (polar residues); that stretch reads TAVTVPACSSRTASTVSTPSSETNYGGTVAVTTPQ. A compositionally biased stretch (low complexity) spans 281–293; that stretch reads SSNQNPNQENQQQ. Residues 340–397 are a coiled coil; the sequence is MKIAMKEKAYAEEAKREAKRQREIAENEFANAKKIRQKAQAELERAKFLKEQSMKKIS.

As to expression, mainly expressed in the endodermis, the gravity-sensing tissue in inflorescence stems. Mostly present in stems and flowers, and, to a lower extent, in seedlings, hypocotyls, roots and the shoot apical meristem (SAM).

Its subcellular location is the nucleus. In terms of biological role, transcription factor involved in inflorescence stems gravitropism, probably by regulating starch accumulation in amyloplasts of graviperceptive cells. Required for stem circumnutation movements. Regulates lateral organ morphogenesis and gravitropic responses. Acts cooperatively with IDD16 to control silique and branche orientation. Involved in the establishment of auxin gradients through the regulation of auxin biosynthesis and transport. This is Zinc finger protein SHOOT GRAVITROPISM 5 from Arabidopsis thaliana (Mouse-ear cress).